A 105-amino-acid chain; its full sequence is SH3 domain-binding glutamic acid-rich-like protein 2 (105 aa).

The SH3-binding signature appears at K61–P67.

This sequence belongs to the SH3BGR family.

The protein localises to the nucleus. The sequence is that of SH3 domain-binding glutamic acid-rich-like protein 2 (sh3bgrl2) from Danio rerio (Zebrafish).